Here is a 353-residue protein sequence, read N- to C-terminus: ATPase GET3A (353 aa).

27 to 34 (KGGVGKTT) lines the ATP pocket. Asp-56 is a catalytic residue. Positions 226 and 253 each coordinate ATP. Positions 320–353 (TTSRSNVEELERKVHTLRLQLKTAEEELERVKSG) form a coiled coil.

Belongs to the arsA ATPase family. In terms of assembly, homodimer. Interacts with GET1 and GET4.

It localises to the cytoplasm. It is found in the cytosol. Its subcellular location is the endoplasmic reticulum. The enzyme catalyses ATP + H2O = ADP + phosphate + H(+). Its function is as follows. ATPase required for the post-translational delivery of tail-anchored (TA) proteins to the endoplasmic reticulum. Recognizes and selectively binds the transmembrane domain of TA proteins in the cytosol. This complex then targets to the endoplasmic reticulum by membrane-bound receptors, where the tail-anchored protein is released for insertion. This process is regulated by ATP binding and hydrolysis. ATP binding drives the homodimer towards the closed dimer state, facilitating recognition of newly synthesized TA membrane proteins. ATP hydrolysis is required for insertion. Subsequently, the homodimer reverts towards the open dimer state, lowering its affinity for the membrane-bound receptor, and returning it to the cytosol to initiate a new round of targeting. Involved in the control of root hair growth through the regulation of syntaxin SYP123 expression. The protein is ATPase GET3A of Arabidopsis thaliana (Mouse-ear cress).